A 394-amino-acid polypeptide reads, in one-letter code: Ketoisovalerate oxidoreductase subunit VorA (394 aa).

Heterotetramer of one alpha, one beta, one delta and one gamma chain.

The catalysed reaction is 3-methyl-2-oxobutanoate + 2 oxidized [2Fe-2S]-[ferredoxin] + CoA = 2-methylpropanoyl-CoA + 2 reduced [2Fe-2S]-[ferredoxin] + CO2 + H(+). In Pyrococcus furiosus (strain ATCC 43587 / DSM 3638 / JCM 8422 / Vc1), this protein is Ketoisovalerate oxidoreductase subunit VorA (vorA).